Reading from the N-terminus, the 95-residue chain is SMAD5 antisense gene protein 1 (95 aa).

Disordered stretches follow at residues 1–24 (MHKQ…SSWS) and 43–70 (SSPT…KPAN). Residues 7-19 (LLPPPATPPPPPQ) show a composition bias toward pro residues.

As to expression, expressed in fetal tissues.

The chain is SMAD5 antisense gene protein 1 (SMAD5-AS1) from Homo sapiens (Human).